The following is a 736-amino-acid chain: Oxysterol-binding protein-related protein 9 (736 aa).

Position 2 is an N-acetylalanine (alanine 2). Residues 2–99 (ASIVEGPLSK…WIHALEETIL (98 aa)) enclose the PH domain. Residues 209–368 (LEPVISTMPS…RDDDGEAGSV (160 aa)) are disordered. Residues 253-274 (TPTPNSTGSGNSPPSSSLTPPS) show a composition bias toward low complexity. A phosphoserine mark is found at serine 306, serine 324, serine 325, serine 326, and serine 329. 2 stretches are compositionally biased toward polar residues: residues 314 to 329 (SSGSASVLTHSSSGNS) and 336 to 348 (TESLNSSMSNGTS). Residue serine 611 is modified to Phosphoserine.

The protein belongs to the OSBP family. In terms of assembly, heterodimer with OSBPL11. Interacts with OSBPL10.

It is found in the late endosome membrane. Its subcellular location is the golgi apparatus. The protein resides in the trans-Golgi network membrane. It catalyses the reaction a 1,2-diacyl-sn-glycero-3-phospho-(1D-myo-inositol 4-phosphate)(out) + a 1,2-diacyl-sn-glycero-3-phospho-L-serine(in) = a 1,2-diacyl-sn-glycero-3-phospho-(1D-myo-inositol 4-phosphate)(in) + a 1,2-diacyl-sn-glycero-3-phospho-L-serine(out). Functionally, interacts with OSBPL11 to function as lipid transfer proteins. Together they form a heterodimer that localizes at the ER-trans-Golgi membrane contact sites, and exchanges phosphatidylserine (1,2-diacyl-sn-glycero-3-phospho-L-serine, PS) for phosphatidylinositol-4-phosphate (1,2-diacyl-sn-glycero-3-phospho-(1D-myo-inositol 4-phosphate), PI(4)P) between the two organelles, a step that is critical for sphingomyelin synthesis in the Golgi complex. In Mus musculus (Mouse), this protein is Oxysterol-binding protein-related protein 9 (Osbpl9).